Consider the following 296-residue polypeptide: Elongation factor Ts (296 aa).

An involved in Mg(2+) ion dislocation from EF-Tu region spans residues 79 to 82; sequence TDFV.

This sequence belongs to the EF-Ts family.

It is found in the cytoplasm. Associates with the EF-Tu.GDP complex and induces the exchange of GDP to GTP. It remains bound to the aminoacyl-tRNA.EF-Tu.GTP complex up to the GTP hydrolysis stage on the ribosome. This Paracoccus denitrificans (strain Pd 1222) protein is Elongation factor Ts.